A 222-amino-acid chain; its full sequence is Probable pyridoxal 5'-phosphate synthase subunit SNO3 (222 aa).

58-60 serves as a coordination point for L-glutamine; that stretch reads GES. Cys91 serves as the catalytic Nucleophile. L-glutamine is bound by residues Arg120 and 151–152; that span reads IR. Active-site charge relay system residues include His197 and Glu199.

Belongs to the glutaminase PdxT/SNO family.

The enzyme catalyses aldehydo-D-ribose 5-phosphate + D-glyceraldehyde 3-phosphate + L-glutamine = pyridoxal 5'-phosphate + L-glutamate + phosphate + 3 H2O + H(+). It catalyses the reaction L-glutamine + H2O = L-glutamate + NH4(+). Its pathway is cofactor biosynthesis; pyridoxal 5'-phosphate biosynthesis. Its function is as follows. Catalyzes the hydrolysis of glutamine to glutamate and ammonia as part of the biosynthesis of pyridoxal 5'-phosphate. The resulting ammonia molecule is channeled to the active site of a SNZ isoform. This is Probable pyridoxal 5'-phosphate synthase subunit SNO3 (SNO3) from Saccharomyces cerevisiae (strain ATCC 204508 / S288c) (Baker's yeast).